A 727-amino-acid chain; its full sequence is Glucans biosynthesis glucosyltransferase H (727 aa).

The disordered stretch occupies residues 18 to 41 (SAMPNERPGAMEPQKLSKMPEGFP). The next 7 helical transmembrane spans lie at 58-78 (FLVV…MGAV), 97-117 (VNFC…LILL), 278-298 (LQQF…GWWV), 408-428 (IMAY…LMLA), 460-480 (LFYI…LLLL), 496-516 (IFSV…MMFI), and 572-592 (LLAW…ISAW).

It belongs to the glycosyltransferase 2 family. OpgH subfamily.

It is found in the cell inner membrane. Its pathway is glycan metabolism; osmoregulated periplasmic glucan (OPG) biosynthesis. In terms of biological role, involved in the biosynthesis of osmoregulated periplasmic glucans (OPGs). The chain is Glucans biosynthesis glucosyltransferase H from Shewanella baltica (strain OS155 / ATCC BAA-1091).